A 925-amino-acid polypeptide reads, in one-letter code: MNAPERQPQPDGGDAPGHEPGGSPQDELDFSILFDYEYLNPNEEEPNAHKVASPPSGPAYPDDVLDYGLKPYSPLASLSGEPPGRFGEPDRVGPQKFLSAAKPAGASGLSPRIEITPSHELIQAVGPLRMRDAGLLVEQPPLAGVAASPRFTLPVPGFEGYREPLCLSPASSGSSASFISDTFSPYTSPCVSPNNGGPDDLCPQFQNIPAHYSPRTSPIMSPRTSLAEDSCLGRHSPVPRPASRSSSPGAKRRHSCAEALVALPPGASPQRSRSPSPQPSSHVAPQDHGSPAGYPPVAGSAVIMDALNSLATDSPCGIPPKMWKTSPDPSPVSAAPSKAGLPRHIYPAVEFLGPCEQGERRNSAPESILLVPPTWPKPLVPAIPICSIPVTASLPPLEWPLSSQSGSYELRIEVQPKPHHRAHYETEGSRGAVKAPTGGHPVVQLHGYMENKPLGLQIFIGTADERILKPHAFYQVHRITGKTVTTTSYEKIVGNTKVLEIPLEPKNNMRATIDCAGILKLRNADIELRKGETDIGRKNTRVRLVFRVHIPESSGRIVSLQTASNPIECSQRSAHELPMVERQDTDSCLVYGGQQMILTGQNFTSESKVVFTEKTTDGQQIWEMEATVDKDKSQPNMLFVEIPEYRNKHIRTPVKVNFYVINGKRKRSQPQHFTYHPVPAIKTEPTDEYDPTLICSPTHGGLGSQPYYPQHPMVAESPSCLVATMAPCQQFRTGLSSPDARYQQQNPAAVLYQRSKSLSPSLLGYQQPALMAAPLSLADAHRSVLVHAGSQGQSSALLHPSPTNQQASPVIHYSPTNQQLRCGSHQEFQHIMYCENFAPGTTRPGPPPVSQGQRLSPGSYPTVIQQQNATSQRAAKNGPPVSDQKEVLPAGVTIKQEQNLDQTYLDDVNEIIRKEFSGPPARNQT.

The tract at residues 1–95 (MNAPERQPQP…FGEPDRVGPQ (95 aa)) is disordered. The residue at position 23 (S23) is a Phosphoserine. Residues 26–34 (DELDFSILF) carry the 9aaTAD motif. A phosphoserine mark is found at S99, S107, and S110. Residues 111 to 116 (PRIEIT) form a calcineurin-binding region. The transactivation domain A (TAD-A) stretch occupies residues 119 to 199 (HELIQAVGPL…CVSPNNGGPD (81 aa)). Phosphoserine is present on residues S148, S168, S171, S172, S174, S175, S177, and S180. Positions 161–175 (YREPLCLSPASSGSS) are required for cytoplasmic retention of the phosphorylated form. Tandem repeats lie at residues 184-200 (SPYTSPCVSPNNGGPDD) and 213-229 (SPRTSPIMSPRTSLAED). A 3 X approximate SP repeats region spans residues 184 to 286 (SPYTSPCVSP…PQPSSHVAPQ (103 aa)). Residues 195–297 (NGGPDDLCPQ…HGSPAGYPPV (103 aa)) form a disordered region. Phosphoserine occurs at positions 213, 217, 221, 236, and 243. Over residues 214–224 (PRTSPIMSPRT) the composition is skewed to polar residues. The Nuclear localization signal signature appears at 251-253 (KRR). Phosphoserine occurs at positions 255, 268, 274, 276, 280, 326, 330, and 363. Positions 264–281 (PPGASPQRSRSPSPQPSS) are enriched in low complexity. A 3; approximate repeat occupies 272–286 (SRSPSPQPSSHVAPQ). The RHD domain maps to 392 to 574 (ASLPPLEWPL…NPIECSQRSA (183 aa)). A DNA-binding region spans residues 421–428 (RAHYETEG). The Nuclear localization signal signature appears at 664–666 (KRK). Residues S755, S757, S759, S856, and S859 each carry the phosphoserine modification. Positions 839–894 (PGTTRPGPPPVSQGQRLSPGSYPTVIQQQNATSQRAAKNGPPVSDQKEVLPAGVTI) are disordered. Polar residues predominate over residues 862–874 (TVIQQQNATSQRA). Residues 904-913 (YLDDVNEIIR) carry the Nuclear export signal motif.

In terms of assembly, member of the multicomponent NFATC transcription complex that consists of at least two components, a pre-existing cytoplasmic component NFATC2 and an inducible nuclear component NFATC1. Other members such as NFATC4, NFATC3 or members of the activating protein-1 family, MAF, GATA4 and Cbp/p300 can also bind the complex. The phosphorylated form specifically interacts with XPO1; which mediates nuclear export. NFATC proteins bind to DNA as monomers. Interacts with NFATC2IP. Interacts with FOXP3. Interacts with TBX21 ('Thr-303' phosphorylated form). Interacts with KAT2A. Interacts with HOMER2 and HOMER3; this interaction competes with calcineurin/PPP3CA-binding and hence prevents NFATC2 dephosphorylation and activation. Interacts with protein phosphatase PPP3CA/calcineurin A. Interacts with AKAP5 (via leucine zipper domain); this is required for NFATC2/NFAT1 recruitment to CRAC channels. In terms of processing, in resting cells, phosphorylated by NFATC-kinase on at least 18 sites in the 99-363 region. Upon cell stimulation, all these sites except Ser-243 are dephosphorylated by calcineurin. Dephosphorylation induces a conformational change that simultaneously exposes an NLS and masks an NES, which results in nuclear localization. Simultaneously, Ser-53 or Ser-56 is phosphorylated; which is required for full transcriptional activity. Ubiquitinated in endothelial cells by RNF213 downstream of the non-canonical Wnt signaling pathway, leading to its degradation by the proteasome. In terms of tissue distribution, expressed in thymus, spleen, heart, testis, brain, placenta, muscle and pancreas. Isoform 1 is highly expressed in the small intestine, heart, testis, prostate, thymus, placenta and thyroid. Isoform 3 is highly expressed in stomach, uterus, placenta, trachea and thyroid.

Its subcellular location is the cytoplasm. The protein resides in the nucleus. Its function is as follows. Plays a role in the inducible expression of cytokine genes in T-cells, especially in the induction of the IL-2, IL-3, IL-4, TNF-alpha or GM-CSF. Promotes invasive migration through the activation of GPC6 expression and WNT5A signaling pathway. Is involved in the negative regulation of chondrogenesis. Recruited by AKAP5 to ORAI1 pore-forming subunit of CRAC channels in Ca(2+) signaling microdomains where store-operated Ca(2+) influx is coupled to calmodulin and calcineurin signaling and activation of NFAT-dependent transcriptional responses. The polypeptide is Nuclear factor of activated T-cells, cytoplasmic 2 (NFATC2) (Homo sapiens (Human)).